A 383-amino-acid polypeptide reads, in one-letter code: S-adenosylmethionine synthase (383 aa).

Residue His15 participates in ATP binding. Asp17 contributes to the Mg(2+) binding site. Glu43 contributes to the K(+) binding site. Residues Glu56 and Gln99 each contribute to the L-methionine site. The interval Gln99–Arg109 is flexible loop. ATP-binding positions include Asp164–Lys166, Arg230–Phe231, Asp239, Arg245–Lys246, Ala262, and Lys266. Asp239 contributes to the L-methionine binding site. Lys270 contributes to the L-methionine binding site.

Belongs to the AdoMet synthase family. As to quaternary structure, homotetramer; dimer of dimers. The cofactor is Mg(2+). It depends on K(+) as a cofactor.

It localises to the cytoplasm. The catalysed reaction is L-methionine + ATP + H2O = S-adenosyl-L-methionine + phosphate + diphosphate. It functions in the pathway amino-acid biosynthesis; S-adenosyl-L-methionine biosynthesis; S-adenosyl-L-methionine from L-methionine: step 1/1. Catalyzes the formation of S-adenosylmethionine (AdoMet) from methionine and ATP. The overall synthetic reaction is composed of two sequential steps, AdoMet formation and the subsequent tripolyphosphate hydrolysis which occurs prior to release of AdoMet from the enzyme. The chain is S-adenosylmethionine synthase from Shewanella loihica (strain ATCC BAA-1088 / PV-4).